A 461-amino-acid polypeptide reads, in one-letter code: GTPase Der (461 aa).

2 consecutive EngA-type G domains span residues 3 to 167 and 190 to 371; these read PQVI…GEKQ and LKLA…AAWS. GTP contacts are provided by residues 9 to 16, 56 to 60, 119 to 122, 196 to 203, 249 to 253, and 314 to 317; these read GRPNVGKS, DTAGW, NKAE, GRPNAGKS, DTAGM, and NKWD. Positions 372 to 456 constitute a KH-like domain; sequence KRVPTAALNR…PIRLTLRSPK (85 aa).

This sequence belongs to the TRAFAC class TrmE-Era-EngA-EngB-Septin-like GTPase superfamily. EngA (Der) GTPase family. In terms of assembly, associates with the 50S ribosomal subunit.

Functionally, GTPase that plays an essential role in the late steps of ribosome biogenesis. In Novosphingobium aromaticivorans (strain ATCC 700278 / DSM 12444 / CCUG 56034 / CIP 105152 / NBRC 16084 / F199), this protein is GTPase Der.